The chain runs to 450 residues: Putative gustatory receptor 28a (450 aa).

The Cytoplasmic segment spans residues 1-47; that stretch reads MAFKLWERFSQADNVFQALRPLTFISLLGLAPFRLNLNPRKEVQTSK. The chain crosses the membrane as a helical span at residues 48 to 68; the sequence is FSFFAGIVHFLFFVLCFGISV. The Extracellular segment spans residues 69-87; it reads KEGDSIIGYFFQTNITRFS. N-linked (GlcNAc...) asparagine glycosylation is present at asparagine 82. Residues 88-108 form a helical membrane-spanning segment; that stretch reads DGTLRLTGILAMSTIFGFAMF. The Cytoplasmic portion of the chain corresponds to 109 to 138; the sequence is KRQRLVSIIQNNIVVDEIFVRLGMKLDYRR. A helical membrane pass occupies residues 139–159; the sequence is ILLSSFLISLGMLLFNVIYLC. The Extracellular portion of the chain corresponds to 160 to 171; the sequence is VSYSLLVSATIS. A helical membrane pass occupies residues 172 to 192; sequence PSFVTFTTFALPHINISLMVF. Over 193 to 292 the chain is Cytoplasmic; sequence KFLCTTDLAR…CQTIEEYFTY (100 aa). Residues 293-313 form a helical membrane-spanning segment; sequence PLLGIIAISFLFILFDDFYIL. Residues 314–329 are Extracellular-facing; sequence EAILNPKRLDVFEADE. The chain crosses the membrane as a helical span at residues 330–350; the sequence is FFAFFLMQLIWYIVIIVLIVE. The Cytoplasmic segment spans residues 351–407; that stretch reads GSSRTILHSSYTAAIVHKILNITDDPELRDRLFRLSLQLSHRKVLFTAAGLFRLDRT. Residues 408–424 form a helical membrane-spanning segment; that stretch reads LIFTITGAATCYLIILI. At 425-450 the chain is on the extracellular side; the sequence is QFRFTHHMDDTSSNSTNNLHSIHLGD. Asparagine 438 is a glycosylation site (N-linked (GlcNAc...) asparagine).

This sequence belongs to the insect chemoreceptor superfamily. Gustatory receptor (GR) family. Gr2a subfamily. In terms of tissue distribution, in addition to expression in a large number of taste neurons, Gr28a is also expressed in a few nonchemosensory neurons, including the campaniform sensilla of the wing, leg stretch receptors, and multiple dendritic (MD) neurons in the abdomen. In larvea, is expressed in neurons of the terminal external chemosensory organ, the dorsal external chemosensory organ, as well as in the ventral and posterior pharyngeal sense organ.

The protein localises to the cell membrane. Functionally, probable gustatory receptor which mediates acceptance or avoidance behavior, depending on its substrates. Atypical expression also suggests nongustatory roles in the nervous system and tissues involved in proprioception, hygroreception, and other sensory modalities. It is also possible that it has chemosensory roles in the detection of internal ligands. This is Putative gustatory receptor 28a (Gr28a) from Drosophila melanogaster (Fruit fly).